The chain runs to 550 residues: Chaperonin GroEL (550 aa).

Residues 30–33, Lys51, 87–91, Gly415, 479–481, and Asp495 each bind ATP; these read TLGP, DGTTT, and NAA. Residues 526–550 are disordered; sequence KDEKSDLGNSSAPSAGGMGGMGGMM. The segment covering 541 to 550 has biased composition (gly residues); the sequence is GGMGGMGGMM.

The protein belongs to the chaperonin (HSP60) family. Forms a cylinder of 14 subunits composed of two heptameric rings stacked back-to-back. Interacts with the co-chaperonin GroES.

The protein localises to the cytoplasm. The catalysed reaction is ATP + H2O + a folded polypeptide = ADP + phosphate + an unfolded polypeptide.. Its function is as follows. Together with its co-chaperonin GroES, plays an essential role in assisting protein folding. The GroEL-GroES system forms a nano-cage that allows encapsulation of the non-native substrate proteins and provides a physical environment optimized to promote and accelerate protein folding. The chain is Chaperonin GroEL from Buchnera aphidicola subsp. Baizongia pistaciae (strain Bp).